We begin with the raw amino-acid sequence, 153 residues long: UPF0260 protein YcgN (153 aa).

This sequence belongs to the UPF0260 family.

This chain is UPF0260 protein YcgN, found in Salmonella typhi.